The sequence spans 295 residues: Ankyrin repeat and SOCS box protein 17 (295 aa).

The stretch at 146–176 (SGITPLLYVAQTRQSNILKILLQYGILEREK) is one ANK repeat. Residues 243–295 (DYIPPTRYKDPCELVHLCRITIRTQLLANNMLPNGIFSLLIPTRLQNFLNLES) enclose the SOCS box domain.

The protein belongs to the ankyrin SOCS box (ASB) family. As to expression, specifically expressed in testis. Localizes to spermatogenic cells in testis, with highest expression in round spermatids and condensing spermatids and lower expression in pachytene spermatocytes.

It participates in protein modification; protein ubiquitination. Its function is as follows. May be a substrate-recognition component of a SCF-like ECS (Elongin-Cullin-SOCS-box protein) E3 ubiquitin-protein ligase complex which mediates the ubiquitination and subsequent proteasomal degradation of target proteins. This Mus musculus (Mouse) protein is Ankyrin repeat and SOCS box protein 17 (Asb17).